The sequence spans 201 residues: MAQQRALPQSKETLLQSYNKRLKDDVKSIMDNFTEIIKTAKIEDETQVSRATQGEQDNYEMHVRAANIVRAGESLMKLVSDLKQFLILNDFPSVNEAIDQRNQQLRALQEECDRKLIALRDEVSIDLYELEEEYYSSSSSLCEANDLPLCEAYWRLDPDTDSTDCLSAPLLASPEPSAGGPLQAAAPTHSHAGGPGPTEHA.

Residues Ser-93–Val-123 adopt a coiled-coil conformation. The disordered stretch occupies residues Leu-166–Ala-201.

As to quaternary structure, component of the Mediator complex, which is composed of MED1, MED4, MED6, MED7, MED8, MED9, MED10, MED11, MED12, MED13, MED13L, MED14, MED15, MED16, MED17, MED18, MED19, MED20, MED21, MED22, MED23, MED24, MED25, MED26, MED27, MED29, MED30, MED31, CCNC, CDK8 and CDC2L6/CDK11. The MED12, MED13, CCNC and CDK8 subunits form a distinct module termed the CDK8 module. Mediator containing the CDK8 module is less active than Mediator lacking this module in supporting transcriptional activation. Individual preparations of the Mediator complex lacking one or more distinct subunits have been variously termed ARC, CRSP, DRIP, PC2, SMCC and TRAP.

It localises to the nucleus. Its function is as follows. Component of the Mediator complex, a coactivator involved in the regulated transcription of nearly all RNA polymerase II-dependent genes. Mediator functions as a bridge to convey information from gene-specific regulatory proteins to the basal RNA polymerase II transcription machinery. Mediator is recruited to promoters by direct interactions with regulatory proteins and serves as a scaffold for the assembly of a functional preinitiation complex with RNA polymerase II and the general transcription factors. The polypeptide is Mediator of RNA polymerase II transcription subunit 22 (MED22) (Bos taurus (Bovine)).